The primary structure comprises 1256 residues: GPI inositol-deacylase (1256 aa).

Positions 37 to 48 (DVYANSTTNATA) are enriched in polar residues. Positions 37-203 (DVYANSTTNA…MEKEEEQKFV (167 aa)) are disordered. Asn-41 and Asn-45 each carry an N-linked (GlcNAc...) asparagine glycan. Over residues 59-68 (PRPSRPSQSS) the composition is skewed to low complexity. Positions 69–83 (AAERTSPESPSVRQS) are enriched in polar residues. A compositionally biased stretch (low complexity) spans 107–135 (QSPSQQSQNQQQQQQQQQQQQQQQQQQQS). Positions 143-156 (SGNFNWKLSHSRNG) are enriched in polar residues. A glycan (N-linked (GlcNAc...) asparagine) is linked at Asn-155. Residues 165–180 (FFSSSFSHSPSTPPLS) are compositionally biased toward low complexity. Residues 190 to 202 (HSKEMEKEEEQKF) show a composition bias toward basic and acidic residues. Residues 214 to 234 (AITFVTLLISILGIGFLALVL) form a helical membrane-spanning segment. N-linked (GlcNAc...) asparagine glycosylation is present at Asn-235. Residue Ser-397 is part of the active site. Asn-582 carries N-linked (GlcNAc...) asparagine glycosylation. Transmembrane regions (helical) follow at residues 882 to 902 (LYMRYRTVFAAFPLLVVTLVL) and 929 to 949 (SIPLVLAFLTFLSLFIWNSSS). A glycan (N-linked (GlcNAc...) asparagine) is linked at Asn-960. 6 consecutive transmembrane segments (helical) span residues 980-1000 (PFFWFLVPVIGLICVGICTVF), 1005-1025 (LTLVHILSTAVSLLSFRPGWI), 1053-1073 (ILLVLVSTLIPYQFAYLVCCL), 1103-1123 (SILLLMLWILPINLPILVVWI), 1130-1150 (WLTPFSSHHNVLSIMPFIILV), and 1172-1192 (VLLFGIALYAAIYGVSYAYML). Asn-1212, Asn-1239, and Asn-1242 each carry an N-linked (GlcNAc...) asparagine glycan.

It belongs to the GPI inositol-deacylase family.

It is found in the endoplasmic reticulum membrane. Involved in inositol deacylation of GPI-anchored proteins which plays important roles in the quality control and ER-associated degradation of GPI-anchored proteins. This chain is GPI inositol-deacylase (bst-1), found in Neurospora crassa (strain ATCC 24698 / 74-OR23-1A / CBS 708.71 / DSM 1257 / FGSC 987).